A 570-amino-acid chain; its full sequence is Polypeptide N-acetylgalactosaminyltransferase 2 (570 aa).

Over 1-6 (MRRRSR) the chain is Cytoplasmic. The helical; Signal-anchor for type II membrane protein transmembrane segment at 7–24 (MLLCFALLWVLGIAYYMY) threads the bilayer. At 25–570 (SGGGSALAAG…QWKFSLNLQQ (546 aa)) the chain is on the lumenal side. S29 is a glycosylation site (O-linked (Xyl...) (chondroitin sulfate) serine). Cystine bridges form between C125-C353, C344-C422, C455-C472, and C495-C512. The tract at residues 134–239 (LPATSVVITF…ERWLEPLLER (106 aa)) is catalytic subdomain A. Residues T142, D175, and R200 each coordinate substrate. Residue D223 participates in Mn(2+) binding. Position 224 (S224) interacts with substrate. H225 is a binding site for Mn(2+). The tract at residues 299-361 (PIKTPMIAGG…PCSRVGHVFR (63 aa)) is catalytic subdomain B. W330 contacts substrate. H358 contacts Mn(2+). Substrate contacts are provided by R361, H364, and Y366. The 124-residue stretch at 442-565 (QDIAFGALQQ…PALSQQWKFS (124 aa)) folds into the Ricin B-type lectin domain. N515 carries N-linked (GlcNAc...) asparagine glycosylation. The residue at position 535 (S535) is a Phosphoserine. A disulfide bridge links C538 with C554.

Belongs to the glycosyltransferase 2 family. GalNAc-T subfamily. Requires Mn(2+) as cofactor. In terms of tissue distribution, widely expressed at high level.

It is found in the golgi apparatus. Its subcellular location is the golgi stack membrane. The protein localises to the secreted. The catalysed reaction is L-seryl-[protein] + UDP-N-acetyl-alpha-D-galactosamine = a 3-O-[N-acetyl-alpha-D-galactosaminyl]-L-seryl-[protein] + UDP + H(+). It carries out the reaction L-threonyl-[protein] + UDP-N-acetyl-alpha-D-galactosamine = a 3-O-[N-acetyl-alpha-D-galactosaminyl]-L-threonyl-[protein] + UDP + H(+). It participates in protein modification; protein glycosylation. Functionally, catalyzes the initial reaction in O-linked oligosaccharide biosynthesis, the transfer of an N-acetyl-D-galactosamine residue to a serine or threonine residue on the protein receptor. Has a broad spectrum of substrates for peptides such as EA2, Muc5AC, Muc1a, Muc1b. Probably involved in O-linked glycosylation of the immunoglobulin A1 (IgA1) hinge region. Involved in O-linked glycosylation of APOC-III, ANGPTL3 and PLTP. It participates in the regulation of HDL-C metabolism. In Mus musculus (Mouse), this protein is Polypeptide N-acetylgalactosaminyltransferase 2 (Galnt2).